The chain runs to 130 residues: Histone H2A type 2-B (130 aa).

Residues methionine 1–alanine 22 are disordered. Serine 2 is modified (N-acetylserine). Phosphoserine; by RPS6KA5 is present on serine 2. Arginine 4 bears the Citrulline; alternate mark. Arginine 4 is subject to Symmetric dimethylarginine; by PRMT5; alternate. Lysine 6 and lysine 10 each carry N6-(2-hydroxyisobutyryl)lysine; alternate. At lysine 6 the chain carries N6-(beta-hydroxybutyryl)lysine; alternate. The segment covering glutamine 7 to serine 19 has biased composition (basic residues). Lysine 10 bears the N6-lactoyllysine; alternate mark. Lysine 10 carries the N6-succinyllysine; alternate modification. Glycyl lysine isopeptide (Lys-Gly) (interchain with G-Cter in ubiquitin) cross-links involve residues lysine 14 and lysine 16. At lysine 37 the chain carries N6-(2-hydroxyisobutyryl)lysine; alternate. Lysine 37 carries the N6-(beta-hydroxybutyryl)lysine; alternate modification. At lysine 37 the chain carries N6-crotonyllysine; alternate. Residues lysine 75 and lysine 76 each carry the N6-(2-hydroxyisobutyryl)lysine modification. Position 96 is an N6-(2-hydroxyisobutyryl)lysine; alternate (lysine 96). At lysine 96 the chain carries N6-succinyllysine; alternate. The residue at position 96 (lysine 96) is an N6-glutaryllysine; alternate. N5-methylglutamine is present on glutamine 105. Lysine 119 bears the N6-(2-hydroxyisobutyryl)lysine; alternate mark. N6-crotonyllysine; alternate occurs at positions 119 and 120. Lysine 119 and lysine 120 each carry N6-glutaryllysine; alternate. Lysine 120 is subject to N6-(beta-hydroxybutyryl)lysine; alternate. Lysine 120 participates in a covalent cross-link: Glycyl lysine isopeptide (Lys-Gly) (interchain with G-Cter in ubiquitin); alternate. Threonine 121 carries the post-translational modification Phosphothreonine; by DCAF1.

The protein belongs to the histone H2A family. In terms of assembly, the nucleosome is a histone octamer containing two molecules each of H2A, H2B, H3 and H4 assembled in one H3-H4 heterotetramer and two H2A-H2B heterodimers. The octamer wraps approximately 147 bp of DNA. Deiminated on Arg-4 in granulocytes upon calcium entry. Post-translationally, monoubiquitination of Lys-120 (H2AK119Ub) by RING1, TRIM37 and RNF2/RING2 complex gives a specific tag for epigenetic transcriptional repression and participates in X chromosome inactivation of female mammals. It is involved in the initiation of both imprinted and random X inactivation. Ubiquitinated H2A is enriched in inactive X chromosome chromatin. Ubiquitination of H2A functions downstream of methylation of 'Lys-27' of histone H3 (H3K27me). H2AK119Ub by RNF2/RING2 can also be induced by ultraviolet and may be involved in DNA repair. Following DNA double-strand breaks (DSBs), it is ubiquitinated through 'Lys-63' linkage of ubiquitin moieties by the E2 ligase UBE2N and the E3 ligases RNF8 and RNF168, leading to the recruitment of repair proteins to sites of DNA damage. Ubiquitination at Lys-14 and Lys-16 (H2AK13Ub and H2AK15Ub, respectively) in response to DNA damage is initiated by RNF168 that mediates monoubiquitination at these 2 sites, and 'Lys-63'-linked ubiquitin are then conjugated to monoubiquitin; RNF8 is able to extend 'Lys-63'-linked ubiquitin chains in vitro. Deubiquitinated by USP51 at Lys-14 and Lys-16 (H2AK13Ub and H2AK15Ub, respectively) after damaged DNA is repaired. H2AK119Ub and ionizing radiation-induced 'Lys-63'-linked ubiquitination (H2AK13Ub and H2AK15Ub) are distinct events. In terms of processing, phosphorylation on Ser-2 (H2AS1ph) is enhanced during mitosis. Phosphorylation on Ser-2 by RPS6KA5/MSK1 directly represses transcription. Acetylation of H3 inhibits Ser-2 phosphorylation by RPS6KA5/MSK1. Phosphorylation at Thr-121 (H2AT120ph) by DCAF1 is present in the regulatory region of many tumor suppresor genes and down-regulates their transcription. Symmetric dimethylation on Arg-4 by the PRDM1/PRMT5 complex may play a crucial role in the germ-cell lineage. Post-translationally, glutamine methylation at Gln-105 (H2AQ104me) by FBL is specifically dedicated to polymerase I. It is present at 35S ribosomal DNA locus and impairs binding of the FACT complex. In terms of processing, crotonylation (Kcr) is specifically present in male germ cells and marks testis-specific genes in post-meiotic cells, including X-linked genes that escape sex chromosome inactivation in haploid cells. Crotonylation marks active promoters and enhancers and confers resistance to transcriptional repressors. It is also associated with post-meiotically activated genes on autosomes. Hydroxybutyrylation of histones is induced by starvation. Post-translationally, lactylated in macrophages by EP300/P300 by using lactoyl-CoA directly derived from endogenous or exogenous lactate, leading to stimulates gene transcription.

Its subcellular location is the nucleus. It localises to the chromosome. Its function is as follows. Core component of nucleosome. Nucleosomes wrap and compact DNA into chromatin, limiting DNA accessibility to the cellular machineries which require DNA as a template. Histones thereby play a central role in transcription regulation, DNA repair, DNA replication and chromosomal stability. DNA accessibility is regulated via a complex set of post-translational modifications of histones, also called histone code, and nucleosome remodeling. The polypeptide is Histone H2A type 2-B (Mus musculus (Mouse)).